The sequence spans 139 residues: NADPH-dependent 7-cyano-7-deazaguanine reductase (139 aa).

Cysteine 34 (thioimide intermediate) is an active-site residue. Aspartate 41 (proton donor) is an active-site residue. Substrate is bound by residues 56-58 (VEL) and 75-76 (HE).

This sequence belongs to the GTP cyclohydrolase I family. QueF type 1 subfamily.

The protein localises to the cytoplasm. The catalysed reaction is 7-aminomethyl-7-carbaguanine + 2 NADP(+) = 7-cyano-7-deazaguanine + 2 NADPH + 3 H(+). The protein operates within tRNA modification; tRNA-queuosine biosynthesis. In terms of biological role, catalyzes the NADPH-dependent reduction of 7-cyano-7-deazaguanine (preQ0) to 7-aminomethyl-7-deazaguanine (preQ1). The chain is NADPH-dependent 7-cyano-7-deazaguanine reductase from Methylobacillus flagellatus (strain ATCC 51484 / DSM 6875 / VKM B-1610 / KT).